Reading from the N-terminus, the 278-residue chain is Gamma carbonic anhydrase 2, mitochondrial (278 aa).

The N-terminal 43 residues, 1–43 (MGTLGRAIYTVGNWIRGTGQALDRVGSLLQGSHRIEEHLSRHR), are a transit peptide targeting the mitochondrion. Substrate-binding positions include 86–88 (RGD) and 101–102 (QD). Positions 107, 130, and 135 each coordinate Zn(2+). Residue asparagine 209 coordinates substrate.

It belongs to the gamma-class carbonic anhydrase family. Homotrimer. Component of the mitochondrial oxidoreductase respiratory chain complex I; element of the extra matrix-exposed domain, which is attached to the membrane arm of this complex. Interacts with GAMMACAL1 and GAMMACAL2. Requires Zn(2+) as cofactor. As to expression, constitutively expressed in roots and leaves, with higher levels in flowers, particularly in tapetal tissue of anthers, inflorescence (IM) and floral meristems (FM).

The protein localises to the mitochondrion membrane. Its function is as follows. Enzyme involved in the catabolism of H(2)CO(3) but that does not mediates the reversible hydration of carbon dioxide. Mediates complex I assembly in mitochondria and respiration. Binds HCO(3)-. Required for male fertility during anther development and dehiscence to regulate the secondary thickenings of the endothecial cell wall, probably by modulating H(2)O(2)-dependent lignin polymerization. In Arabidopsis thaliana (Mouse-ear cress), this protein is Gamma carbonic anhydrase 2, mitochondrial (GAMMACA2).